Here is a 90-residue protein sequence, read N- to C-terminus: Neurotoxin LmNaTx19 (90 aa).

The N-terminal stretch at M1–C19 is a signal peptide. The 60-residue stretch at K21–G80 folds into the LCN-type CS-alpha/beta domain. 4 disulfide bridges follow: C31/C79, C35/C55, C41/C62, and C45/C64.

The protein belongs to the long (4 C-C) scorpion toxin superfamily. Sodium channel inhibitor family. Alpha subfamily. Expressed by the venom gland.

It is found in the secreted. In terms of biological role, binds voltage-independently at site-3 of voltage-gated sodium channels (Nav) and inhibits the inactivation of the activated channels, thereby blocking neuronal transmission. This Lychas mucronatus (Chinese swimming scorpion) protein is Neurotoxin LmNaTx19.